Consider the following 146-residue polypeptide: Large ribosomal subunit protein bL9 (146 aa).

It belongs to the bacterial ribosomal protein bL9 family.

Its function is as follows. Binds to the 23S rRNA. The chain is Large ribosomal subunit protein bL9 from Flavobacterium johnsoniae (strain ATCC 17061 / DSM 2064 / JCM 8514 / BCRC 14874 / CCUG 350202 / NBRC 14942 / NCIMB 11054 / UW101) (Cytophaga johnsonae).